The primary structure comprises 310 residues: D-alanyl-D-alanine endopeptidase (310 aa).

An N-terminal signal peptide occupies residues 1-25 (MPKFRVSLFSLALMLAVPFAPQAVA). S67 functions as the Acyl-ester intermediate in the catalytic mechanism. K70 (proton acceptor) is an active-site residue. S124 is an active-site residue. K231 lines the substrate pocket.

It belongs to the peptidase S11 family. In terms of processing, pbp8 is a proteolytic product of Pbp7.

It is found in the periplasm. Functionally, cell wall formation. May play a specialized role in remodeling the cell wall. Specifically hydrolyzes the DD-diaminopimelate-alanine bonds in high-molecular-mass murein sacculi. The sequence is that of D-alanyl-D-alanine endopeptidase (pbpG) from Escherichia coli (strain K12).